A 480-amino-acid polypeptide reads, in one-letter code: ATP-grasp enzyme ankG (480 aa).

The disordered stretch occupies residues 1–30 (MYQISLKATKSAAEPTSSTDASHDDRQVER). Basic and acidic residues predominate over residues 21–30 (ASHDDRQVER).

The catalysed reaction is NK13650 D + L-aspartate + ATP = NK13650 C + AMP + diphosphate + H(+). The enzyme catalyses NK13650 B + L-aspartate + ATP = NK13650 A + AMP + diphosphate + H(+). It participates in secondary metabolite biosynthesis. ATP-grasp enzyme; part of the ank cluster that mediates the biosynthesis of NK13650 C, a highly modified cyclo-arginine-tyrosine dipeptide. AnkG catalyzes the last step of the pathway via amidation NK13650 D with L-Asp to produce NK13650 C. AnkG also amidates NK13650 B into NK13650 A. Within the pathway, the cyclodipeptide synthase ankA acts as the scaffold-generating enzyme and is responsible for formation of the cyclo-Arg-Tyr diketopiperazine (cRY) from L-Arg and L-Tyr. The ankA product cRY is desaturated by the cytochrome P450 monooxygenase ankB to yield a dehydro-cyclodipeptide intermediate. The FAD-dependent monooxygenase ankC then installs the m-OH, ankD catalyzes the attachment of L-homoserine, and ankE ligates citrate to the ankD product to yield NK13650 B. The O-methyltransferase ankF is responsible for methylation of the C-17 phenol group of NK13650 B to produce NK13650 D. Amidation of NK13650 D with L-Asp by ankG then leads to the production of NK13650 C, whereas amidation of NK13650 B produces NK13650 A. This chain is ATP-grasp enzyme ankG, found in Aspergillus thermomutatus (Neosartorya pseudofischeri).